The chain runs to 1021 residues: INO80 complex subunit D (1021 aa).

A Glycyl lysine isopeptide (Lys-Gly) (interchain with G-Cter in SUMO2) cross-link involves residue K87. Phosphoserine is present on S132. 5 disordered regions span residues 194–239 (FSTP…PMQG), 514–570 (RGDN…SMPT), 808–844 (RQQY…PHTS), 911–940 (SLST…SVLP), and 976–1021 (QLSS…PSPN). A compositionally biased stretch (polar residues) spans 224 to 239 (VCKSPQPQNTSLPMQG). Basic residues predominate over residues 520 to 554 (KVQHQQQRKPRKKTKPPALTKKHKKKRRRGPRRPQ). A compositionally biased stretch (low complexity) spans 911–926 (SLSTPPTTSNSETTQP). Residues 931–940 (VTPSSSSVLP) are compositionally biased toward polar residues. Positions 995-1014 (APPTGFTATGATATSTNNAS) are enriched in low complexity.

Belongs to the INO80D family. As to quaternary structure, component of the chromatin remodeling INO80 complex; specifically part of a complex module associated with the N-terminus of INO80.

It is found in the nucleus. Putative regulatory component of the chromatin remodeling INO80 complex which is involved in transcriptional regulation, DNA replication and probably DNA repair. The chain is INO80 complex subunit D from Mus musculus (Mouse).